The primary structure comprises 403 residues: Nuclear receptor subfamily 2 group F member 5 (403 aa).

A disordered region spans residues 16–44; the sequence is PGSQLQMCSQEPGGTPGTPSGSTPGNDAL. The segment at residues 51-126 is a DNA-binding region (nuclear receptor); the sequence is NVDCMVCGDK…VGMRREAVQR (76 aa). 2 NR C4-type zinc fingers span residues 54 to 74 and 90 to 114; these read CMVC…CEGC and CRGN…LKKC. An NR LBD domain is found at 152-378; it reads YLSGFISLLL…TLLRDMLLSG (227 aa).

This sequence belongs to the nuclear hormone receptor family. NR2 subfamily.

The protein resides in the nucleus. Functionally, putative receptor that is required in photoreceptor cells precursors during eye development. The chain is Nuclear receptor subfamily 2 group F member 5 (nr2f5) from Danio rerio (Zebrafish).